Reading from the N-terminus, the 361-residue chain is D-alanine--D-alanine ligase (361 aa).

The ATP-grasp domain maps to 134–344 (KILAQRAGVP…YTDLITKLID (211 aa)). Position 169 to 224 (169 to 224 (ASQLGSDLFVKPSNQGSSVGVSHVTNEKEYKVALAEAFKYDDKVLVEETVHGTEVE)) interacts with ATP. Mg(2+) contacts are provided by Asp-297, Glu-311, and Asn-313.

Belongs to the D-alanine--D-alanine ligase family. Requires Mg(2+) as cofactor. The cofactor is Mn(2+).

It localises to the cytoplasm. The enzyme catalyses 2 D-alanine + ATP = D-alanyl-D-alanine + ADP + phosphate + H(+). Its pathway is cell wall biogenesis; peptidoglycan biosynthesis. Its function is as follows. Cell wall formation. This Lactobacillus gasseri (strain ATCC 33323 / DSM 20243 / BCRC 14619 / CIP 102991 / JCM 1131 / KCTC 3163 / NCIMB 11718 / NCTC 13722 / AM63) protein is D-alanine--D-alanine ligase.